The chain runs to 570 residues: Periplasmic trehalase (570 aa).

A signal peptide spans 1 to 34 (MITPALRHSGTLSFAIKLTVASTLLTFASLSAHA). Substrate is bound by residues Arg-157, 164–165 (WD), Asn-201, 210–212 (RSQ), 282–284 (RPE), and Gly-315. Catalysis depends on proton donor/acceptor residues Asp-317 and Glu-501. Residue Glu-516 coordinates substrate. The interval 542-570 (KPCDSVPATRPAAPGASQPAPQKQVETTP) is disordered. The segment covering 552–570 (PAAPGASQPAPQKQVETTP) has biased composition (low complexity).

The protein belongs to the glycosyl hydrolase 37 family. In terms of assembly, monomer.

It localises to the periplasm. The catalysed reaction is alpha,alpha-trehalose + H2O = alpha-D-glucose + beta-D-glucose. Functionally, provides the cells with the ability to utilize trehalose at high osmolarity by splitting it into glucose molecules that can subsequently be taken up by the phosphotransferase-mediated uptake system. The protein is Periplasmic trehalase of Citrobacter koseri (strain ATCC BAA-895 / CDC 4225-83 / SGSC4696).